Consider the following 620-residue polypeptide: 1-deoxy-D-xylulose-5-phosphate synthase (620 aa).

Residues His-80 and 121 to 123 (GHS) each bind thiamine diphosphate. Asp-152 lines the Mg(2+) pocket. Thiamine diphosphate contacts are provided by residues 153–154 (GA), Asn-181, Tyr-288, and Glu-370. Residue Asn-181 coordinates Mg(2+).

Belongs to the transketolase family. DXPS subfamily. In terms of assembly, homodimer. Mg(2+) is required as a cofactor. It depends on thiamine diphosphate as a cofactor.

The enzyme catalyses D-glyceraldehyde 3-phosphate + pyruvate + H(+) = 1-deoxy-D-xylulose 5-phosphate + CO2. The protein operates within metabolic intermediate biosynthesis; 1-deoxy-D-xylulose 5-phosphate biosynthesis; 1-deoxy-D-xylulose 5-phosphate from D-glyceraldehyde 3-phosphate and pyruvate: step 1/1. Catalyzes the acyloin condensation reaction between C atoms 2 and 3 of pyruvate and glyceraldehyde 3-phosphate to yield 1-deoxy-D-xylulose-5-phosphate (DXP). The chain is 1-deoxy-D-xylulose-5-phosphate synthase from Shigella flexneri.